Consider the following 438-residue polypeptide: Keratin, type I cytoskeletal 18 (438 aa).

Residues 4-83 form a head region; that stretch reads AVSSRSTVVS…TLSGNAVISN (80 aa). The tract at residues 84-119 is coil 1A; the sequence is EKETMQDLNDRLSNYLETVRRLENANQQLEIQIREA. Residues 84 to 395 enclose the IF rod domain; the sequence is EKETMQDLND…HLLGGEDSDT (312 aa). The linker 1 stretch occupies residues 120 to 136; the sequence is MEKRGPSVRDYSNYEKI. Residues 137-228 form a coil 1B region; the sequence is IKELRDQIYD…KNHEDEVIAL (92 aa). The tract at residues 229–252 is linker 12; the sequence is RNQVNSCGVQVDLDAPKGTDLAEI. Residues 253–393 form a coil 2 region; sequence MATLRAEYEA…YRHLLGGEDS (141 aa). Residues 394–438 form a tail region; it reads DTLSLQDALSAMKVSNVQTVQKIVVTTQKLVDGKVVEDSTVTETK.

This sequence belongs to the intermediate filament family. As to quaternary structure, heterotetramer of two type I and two type II keratins. Keratin-18 associates with keratin-8. Phosphorylated. In terms of processing, proteolytically cleaved by caspases during epithelial cell apoptosis. As to expression, expressed at low levels in skin.

When phosphorylated, plays a role in filament reorganization. This Protopterus aethiopicus (Marbled lungfish) protein is Keratin, type I cytoskeletal 18.